Consider the following 362-residue polypeptide: Major capsid protein VP1 (362 aa).

Residues 1 to 21 (MAPTKRKGSCPGAAPKKPKEP) form a disordered region. The short motif at 5-19 (KRKGSCPGAAPKKPK) is the Bipartite nuclear localization signal element. The C-terminal arm stretch occupies residues 302–362 (ISFLLSDLIN…EFGQTTTRMQ (61 aa)). Thr-338 bears the Phosphothreonine; by host mark.

It belongs to the polyomaviruses coat protein VP1 family. In terms of assembly, homomultimer; disulfide-linked. The virus capsid is composed of 72 icosahedral units, each one composed of five disulfide-linked copies of VP1. Interacts with agnoprotein. Interacts with minor capsid proteins VP2 and VP3. Interacts with host HSPA8; this interaction probably participates in virus assembly. Interacts with host SP1; this interaction enhances the efficiency of viral packaging.

Its subcellular location is the virion. The protein localises to the host nucleus. It is found in the host endoplasmic reticulum. Functionally, forms an icosahedral capsid with a T=7 symmetry and a 40 nm diameter. The capsid is composed of 72 pentamers linked to each other by disulfide bonds and associated with VP2 or VP3 proteins. Binds to N-glycolylneuraminic analog of the ganglioside GM1 on the cell surface to provide virion attachment to target cell. Once attached, the virion is internalized by caveolin-mediated endocytosis and traffics to the endoplasmic reticulum. Inside the endoplasmic reticulum, the protein folding machinery isomerizes VP1 interpentamer disulfide bonds, thereby triggering initial uncoating. Next, the virion uses the endoplasmic reticulum-associated degradation machinery to probably translocate in the cytosol before reaching the nucleus. Nuclear entry of the viral DNA involves the selective exposure and importin recognition of VP2/Vp3 nuclear localization signal. The assembly takes place in the cell nucleus. Encapsulates the genomic DNA and participates in rearranging nucleosomes around the viral DNA. The viral progenies exit the cells by lytic release. The protein is Major capsid protein VP1 of Macaca (macaques).